The sequence spans 102 residues: MSARAFRKFAPLFDRVLVQRFEAETKSKGGIMLPEKAKGKVLEATVVAHGPGVKNEKGEVVPVCVTVGDKVFLPEYGGTKVVLEDTEYFLFRESDILAKFEK.

Belongs to the GroES chaperonin family. As to quaternary structure, homohexamer.

The protein resides in the mitochondrion matrix. Its function is as follows. Eukaryotic CPN10 homolog which is essential for mitochondrial protein biogenesis, together with CPN60. Binds to CPN60 in the presence of Mg-ATP and suppresses the ATPase activity of the latter. The chain is 10 kDa heat shock protein, mitochondrial from Schistosoma japonicum (Blood fluke).